A 74-amino-acid chain; its full sequence is NAD(P)H-quinone oxidoreductase subunit O (74 aa).

This sequence belongs to the complex I NdhO subunit family. NDH-1 can be composed of about 15 different subunits; different subcomplexes with different compositions have been identified which probably have different functions.

The protein localises to the cellular thylakoid membrane. It carries out the reaction a plastoquinone + NADH + (n+1) H(+)(in) = a plastoquinol + NAD(+) + n H(+)(out). The catalysed reaction is a plastoquinone + NADPH + (n+1) H(+)(in) = a plastoquinol + NADP(+) + n H(+)(out). Functionally, NDH-1 shuttles electrons from an unknown electron donor, via FMN and iron-sulfur (Fe-S) centers, to quinones in the respiratory and/or the photosynthetic chain. The immediate electron acceptor for the enzyme in this species is believed to be plastoquinone. Couples the redox reaction to proton translocation, and thus conserves the redox energy in a proton gradient. Cyanobacterial NDH-1 also plays a role in inorganic carbon-concentration. The chain is NAD(P)H-quinone oxidoreductase subunit O from Synechococcus sp. (strain RCC307).